A 360-amino-acid chain; its full sequence is Lipid-A-disaccharide synthase (360 aa).

This sequence belongs to the LpxB family.

The enzyme catalyses a lipid X + a UDP-2-N,3-O-bis[(3R)-3-hydroxyacyl]-alpha-D-glucosamine = a lipid A disaccharide + UDP + H(+). It participates in bacterial outer membrane biogenesis; LPS lipid A biosynthesis. In terms of biological role, condensation of UDP-2,3-diacylglucosamine and 2,3-diacylglucosamine-1-phosphate to form lipid A disaccharide, a precursor of lipid A, a phosphorylated glycolipid that anchors the lipopolysaccharide to the outer membrane of the cell. The chain is Lipid-A-disaccharide synthase from Helicobacter pylori (strain HPAG1).